A 255-amino-acid chain; its full sequence is ParA family protein CT_582 (255 aa).

This sequence belongs to the ParA family.

The chain is ParA family protein CT_582 from Chlamydia trachomatis serovar D (strain ATCC VR-885 / DSM 19411 / UW-3/Cx).